The following is a 450-amino-acid chain: Tubulin alpha-4 chain (450 aa).

Gln-11 lines the GTP pocket. Residue Lys-40 is modified to N6-acetyllysine. The GTP site is built by Glu-71, Gly-144, Thr-145, Thr-179, Asn-206, and Asn-228. Residue Glu-71 participates in Mg(2+) binding. The active site involves Glu-254. The interval 431–450 is disordered; sequence DYEEVGAESGEGDEGDEEEY.

Belongs to the tubulin family. In terms of assembly, dimer of alpha and beta chains. A typical microtubule is a hollow water-filled tube with an outer diameter of 25 nm and an inner diameter of 15 nM. Alpha-beta heterodimers associate head-to-tail to form protofilaments running lengthwise along the microtubule wall with the beta-tubulin subunit facing the microtubule plus end conferring a structural polarity. Microtubules usually have 13 protofilaments but different protofilament numbers can be found in some organisms and specialized cells. The cofactor is Mg(2+). In terms of processing, undergoes a tyrosination/detyrosination cycle, the cyclic removal and re-addition of a C-terminal tyrosine residue by the enzymes tubulin tyrosine carboxypeptidase (TTCP) and tubulin tyrosine ligase (TTL), respectively. Acetylation of alpha chains at Lys-40 stabilizes microtubules and affects affinity and processivity of microtubule motors. This modification has a role in multiple cellular functions, ranging from cell motility, cell cycle progression or cell differentiation to intracellular trafficking and signaling.

The protein localises to the cytoplasm. Its subcellular location is the cytoskeleton. It catalyses the reaction GTP + H2O = GDP + phosphate + H(+). Functionally, tubulin is the major constituent of microtubules, a cylinder consisting of laterally associated linear protofilaments composed of alpha- and beta-tubulin heterodimers. Microtubules grow by the addition of GTP-tubulin dimers to the microtubule end, where a stabilizing cap forms. Below the cap, tubulin dimers are in GDP-bound state, owing to GTPase activity of alpha-tubulin. This Gossypium hirsutum (Upland cotton) protein is Tubulin alpha-4 chain.